The sequence spans 154 residues: SsrA-binding protein (154 aa).

This sequence belongs to the SmpB family.

The protein localises to the cytoplasm. In terms of biological role, required for rescue of stalled ribosomes mediated by trans-translation. Binds to transfer-messenger RNA (tmRNA), required for stable association of tmRNA with ribosomes. tmRNA and SmpB together mimic tRNA shape, replacing the anticodon stem-loop with SmpB. tmRNA is encoded by the ssrA gene; the 2 termini fold to resemble tRNA(Ala) and it encodes a 'tag peptide', a short internal open reading frame. During trans-translation Ala-aminoacylated tmRNA acts like a tRNA, entering the A-site of stalled ribosomes, displacing the stalled mRNA. The ribosome then switches to translate the ORF on the tmRNA; the nascent peptide is terminated with the 'tag peptide' encoded by the tmRNA and targeted for degradation. The ribosome is freed to recommence translation, which seems to be the essential function of trans-translation. This chain is SsrA-binding protein, found in Synechocystis sp. (strain ATCC 27184 / PCC 6803 / Kazusa).